Consider the following 558-residue polypeptide: Phosphatidylserine lipase ABHD16A (558 aa).

Helical transmembrane passes span 60–80 (ILAL…FAFF) and 93–113 (VVPF…VACL). At 114 to 558 (RGIGRWTNPQ…AQNFQMPWHL (445 aa)) the chain is on the cytoplasmic side. The region spanning 281 to 407 (LVICCEGNAG…LVTRTVRQHL (127 aa)) is the AB hydrolase-1 domain. Active-site charge relay system residues include serine 355, aspartate 430, and histidine 507.

It belongs to the AB hydrolase superfamily. ABHD16 family.

The protein resides in the membrane. The enzyme catalyses 1-heptadecanoyl-2-(5Z,8Z,11Z,14Z-eicosatetraenoyl)-sn-glycero-3-phosphoserine + H2O = 1-heptadecanoyl-sn-glycero-3-phosphoserine + (5Z,8Z,11Z,14Z)-eicosatetraenoate + H(+). The catalysed reaction is 1-hexadecanoyl-2-(9Z-octadecenoyl)-sn-glycero-3-phospho-L-serine + H2O = 1-hexadecanoyl-sn-glycero-3-phospho-L-serine + (9Z)-octadecenoate + H(+). It carries out the reaction 1-octadecanoyl-2-(9Z,12Z-octadecadienoyl)-sn-glycero-3-phosphoserine + H2O = 1-octadecanoyl-sn-glycero-3-phosphoserine + (9Z,12Z)-octadecadienoate + H(+). It catalyses the reaction 1-heptadecanoyl-2-(5Z,8Z,11Z,14Z-eicosatetraenoyl)-sn-glycero-3-phosphocholine + H2O = 1-heptadecanoyl-sn-glycero-3-phosphocholine + (5Z,8Z,11Z,14Z)-eicosatetraenoate + H(+). The enzyme catalyses 1-hexadecanoyl-2-(9Z-octadecenoyl)-sn-glycero-3-phosphoglycerol + H2O = 1-hexadecanoyl-sn-glycero-3-phosphoglycerol + (9Z)-octadecenoate + H(+). The catalysed reaction is 1-hexadecanoyl-2-(9Z-octadecenoyl)-sn-glycero-3-phospho-(1D-myo-inositol) + H2O = 1-hexadecanoyl-sn-glycero-3-phospho-(1D-myo-inositol) + (9Z)-octadecenoate + H(+). It carries out the reaction 1-heptadecanoyl-2-(5Z,8Z,11Z,14Z-eicosatetraenoyl)-sn-glycero-3-phosphoethanolamine + H2O = 1-heptadecanoyl-sn-glycero-3-phosphoethanolamine + (5Z,8Z,11Z,14Z)-eicosatetraenoate + H(+). It catalyses the reaction 1-hexadecanoyl-2-(9Z-octadecenoyl)-sn-glycero-3-phospho-(1'-sn-glycerol) + H2O = 1-hexadecanoyl-sn-glycero-3-phospho-(1'-sn-glycerol) + (9Z)-octadecenoate + H(+). The enzyme catalyses Hydrolyzes glycerol monoesters of long-chain fatty acids.. The catalysed reaction is 1-tetradecanoylglycerol + H2O = tetradecanoate + glycerol + H(+). It carries out the reaction 2-hexadecanoylglycerol + H2O = glycerol + hexadecanoate + H(+). It catalyses the reaction 1-(9Z-octadecenoyl)-glycerol + H2O = glycerol + (9Z)-octadecenoate + H(+). The enzyme catalyses 2-(9Z-octadecenoyl)-glycerol + H2O = glycerol + (9Z)-octadecenoate + H(+). The catalysed reaction is 2-(9Z,12Z-octadecadienoyl)-glycerol + H2O = (9Z,12Z)-octadecadienoate + glycerol + H(+). It carries out the reaction 1-(5Z,8Z,11Z,14Z-eicosatetraenoyl)-glycerol + H2O = glycerol + (5Z,8Z,11Z,14Z)-eicosatetraenoate + H(+). It catalyses the reaction 2-(5Z,8Z,11Z,14Z-eicosatetraenoyl)-glycerol + H2O = glycerol + (5Z,8Z,11Z,14Z)-eicosatetraenoate + H(+). The enzyme catalyses prostaglandin D2-1-glycerol ester + H2O = prostaglandin D2 + glycerol + H(+). The catalysed reaction is 2-glyceryl-15-deoxy-Delta(12,14)-prostaglandin J2 + H2O = 15-deoxy-Delta(12,14)-prostaglandin J2 + glycerol + H(+). It carries out the reaction 1-(9Z,12Z-octadecadienoyl)-glycerol + H2O = (9Z,12Z)-octadecadienoate + glycerol + H(+). Phosphatidylserine (PS) lipase that mediates the hydrolysis of phosphatidylserine to generate lysophosphatidylserine (LPS). LPS constitutes a class of signaling lipids that regulates immunological and neurological processes. Has no activity towards diacylglycerol, triacylglycerol or lysophosphatidylserine lipase. Also has monoacylglycerol lipase activity, with preference for 1-(9Z,12Z-octadecadienoyl)-glycerol (1-LG) and 2-glyceryl-15-deoxy-Delta(12,14)-prostaglandin J2 (15d-PGJ(2)-G). In Bos taurus (Bovine), this protein is Phosphatidylserine lipase ABHD16A.